The following is a 156-amino-acid chain: Arginine repressor (156 aa).

It belongs to the ArgR family.

It is found in the cytoplasm. It functions in the pathway amino-acid biosynthesis; L-arginine biosynthesis [regulation]. Regulates arginine biosynthesis genes. This chain is Arginine repressor, found in Escherichia coli O81 (strain ED1a).